The sequence spans 90 residues: U7-theraphotoxin-Hhn1j (90 aa).

A signal peptide spans 1 to 19; the sequence is MKTAIFTVVLALAVFAVLS. The propeptide occupies 20–50; sequence FGWEANEKALSEEFTELIHEKEAASETEARE. Cystine bridges form between cysteine 51-cysteine 65, cysteine 58-cysteine 70, and cysteine 64-cysteine 81.

This sequence belongs to the neurotoxin 10 (Hwtx-1) family. 13 (Hntx-13) subfamily. In terms of tissue distribution, expressed by the venom gland.

Its subcellular location is the secreted. Ion channel inhibitor. In Cyriopagopus hainanus (Chinese bird spider), this protein is U7-theraphotoxin-Hhn1j.